The primary structure comprises 502 residues: MSIRAEEISALIKQQIENYQSEIEVSDVGTVIQVGDGIARAHGLDNVMAGELVEFSNGVMGLAQNLEENNVGIIILGPYTEIREGDEVRRTGRIMQVPVGKELIGRVVNPLGQPVDGLGPINTTNTRPIESPAPGVMDRKSVHEPLQTGIKAIDALVPIGRGQRELIIGDRQTGKTAVALDTIINQKDEDMICIYVAIGQKESTVRNVVETLRKHGALEYTIVVTASASQPAPLLYLAPYAGVTMGEEFMYNGKHVLVVYDDLSKQAAAYRELSLLLRRPPGREAYPGDVFYLHSRLLERAAKLSDARGGGSLTALPFIETQAGDVSAYIPTNVISITDGQIFLQSDLFFSGVRPAIDAGTSVSRVGGSAQIKAMSKVSGTLRLDLASYRELEAFAQFGSDLDKATQAKLNRGARTVEVLKQGLHKPLRVEKQVIILYALTRGFLDDIPVVDITRFEEEFHAWLDSNATDLLEEIRTTKKLADDDKFAAAINGFKKVFVASE.

The tract at residues Val115–Gly135 is disordered. Gly169–Thr176 is an ATP binding site.

It belongs to the ATPase alpha/beta chains family. In terms of assembly, F-type ATPases have 2 components, CF(1) - the catalytic core - and CF(0) - the membrane proton channel. CF(1) has five subunits: alpha(3), beta(3), gamma(1), delta(1), epsilon(1). CF(0) has three main subunits: a(1), b(2) and c(9-12). The alpha and beta chains form an alternating ring which encloses part of the gamma chain. CF(1) is attached to CF(0) by a central stalk formed by the gamma and epsilon chains, while a peripheral stalk is formed by the delta and b chains.

Its subcellular location is the cell membrane. The enzyme catalyses ATP + H2O + 4 H(+)(in) = ADP + phosphate + 5 H(+)(out). Produces ATP from ADP in the presence of a proton gradient across the membrane. The alpha chain is a regulatory subunit. This is ATP synthase subunit alpha from Bacillus cereus (strain G9842).